Consider the following 472-residue polypeptide: Membrane-bound acylglycerophosphatidylinositol O-acyltransferase MBOAT7 (472 aa).

The Cytoplasmic portion of the chain corresponds to 1-5 (MSPEE). Residues 6–22 (WTYLVVLLISIPIGFLF) traverse the membrane as a helical segment. Topologically, residues 23–33 (KKAGPGLKRWG) are lumenal. Residues 34-57 (AAAVGLGLTLFTCGPHTLHSLVTI) form a helical membrane-spanning segment. At 58–73 (LGTWALIQAQPCSCHA) the chain is on the cytoplasmic side. A helical transmembrane segment spans residues 74-93 (LALAWTFSYLLFFRALSLLG). Residues 94-194 (LPTPTPFTNA…VPSLRPLLRR (101 aa)) lie on the Lumenal side of the membrane. The chain crosses the membrane as a helical span at residues 195 to 212 (AWPAPLFGLLFLLSSHLF). At 213–231 (PLEAVREDAFYARPLPARL) the chain is on the cytoplasmic side. A helical transmembrane segment spans residues 232–261 (FYMIPVFFAFRMRFYVAWIAAECGCIAAGF). The Lumenal portion of the chain corresponds to 262–426 (GAYPVAAKAR…LSLRDTLRYW (165 aa)). N-linked (GlcNAc...) asparagine glycosylation occurs at Asn321. A helical transmembrane segment spans residues 427-447 (ASVYFCVHVLALAALGLGLAL). Residues 448-472 (GRGGPGRRKSGAPAPSPASGKLREE) lie on the Cytoplasmic side of the membrane. The segment at 450–472 (GGPGRRKSGAPAPSPASGKLREE) is disordered.

This sequence belongs to the membrane-bound acyltransferase family. In terms of assembly, interacts with SPTSSA; the interaction facilitates MBOAT7 location to mitochondria-associated membranes (MAMs).

The protein localises to the endoplasmic reticulum membrane. The catalysed reaction is a 1-acyl-sn-glycero-3-phospho-(1D-myo-inositol) + an acyl-CoA = a 1,2-diacyl-sn-glycero-3-phospho-(1D-myo-inositol) + CoA. It catalyses the reaction a 1-acyl-sn-glycero-3-phospho-(1D-myo-inositol) + (5Z,8Z,11Z,14Z)-eicosatetraenoyl-CoA = a 1-acyl-2-(5Z,8Z,11Z,14Z-eicosatetraenoyl)-sn-glycero-3-phospho-(1D-myo-inositol) + CoA. The enzyme catalyses (5Z,8Z,11Z,14Z)-eicosatetraenoyl-CoA + 1-hexadecanoyl-sn-glycero-3-phosphocholine = 1-hexadecanoyl-2-(5Z,8Z,11Z,14Z-eicosatetraenoyl)-sn-glycero-3-phosphocholine + CoA. It carries out the reaction 1-octadecanoyl-sn-glycero-3-phospho-(1D-myo-inositol) + (5Z,8Z,11Z,14Z)-eicosatetraenoyl-CoA = 1-octadecanoyl-2-(5Z,8Z,11Z,14Z-eicosatetraenoyl)-sn-glycero-3-phospho-(1D-myo-inositol) + CoA. It functions in the pathway lipid metabolism; phospholipid metabolism. Its function is as follows. Acyltransferase which catalyzes the transfer of an acyl group from an acyl-CoA to a lysophosphatidylinositol (1-acylglycerophosphatidylinositol or LPI) leading to the production of a phosphatidylinositol (1,2-diacyl-sn-glycero-3-phosphoinositol or PI) and participates in the reacylation step of the phospholipid remodeling pathway also known as the Lands cycle. Prefers arachidonoyl-CoA as the acyl donor, thus contributing to the regulation of free levels arachidonic acid in cell. In liver, participates in the regulation of triglyceride metabolism through the phosphatidylinositol acyl-chain remodeling regulation. This is Membrane-bound acylglycerophosphatidylinositol O-acyltransferase MBOAT7 (MBOAT7) from Bos taurus (Bovine).